The following is a 211-amino-acid chain: Prolactin-1 (211 aa).

The first 23 residues, 1–23 (MARRSQGTKLHLAVLCLVVSCHA), serve as a signal peptide directing secretion. Disulfide bonds link Cys69-Cys184 and Cys201-Cys211.

The protein belongs to the somatotropin/prolactin family.

Its subcellular location is the secreted. The polypeptide is Prolactin-1 (prl1) (Oncorhynchus keta (Chum salmon)).